A 424-amino-acid chain; its full sequence is Trigger factor (424 aa).

The PPIase FKBP-type domain maps to 163–248; the sequence is GDTVVLDFEG…IHEIKAKELP (86 aa).

This sequence belongs to the FKBP-type PPIase family. Tig subfamily.

It localises to the cytoplasm. The catalysed reaction is [protein]-peptidylproline (omega=180) = [protein]-peptidylproline (omega=0). Its function is as follows. Involved in protein export. Acts as a chaperone by maintaining the newly synthesized protein in an open conformation. Functions as a peptidyl-prolyl cis-trans isomerase. The polypeptide is Trigger factor (Bacillus pumilus (strain SAFR-032)).